Here is a 341-residue protein sequence, read N- to C-terminus: RNA 3'-terminal phosphate cyclase (341 aa).

ATP contacts are provided by residues Gln100 and 283-287 (FLGDQ). His307 acts as the Tele-AMP-histidine intermediate in catalysis.

The protein belongs to the RNA 3'-terminal cyclase family. Type 1 subfamily.

It is found in the cytoplasm. The catalysed reaction is a 3'-end 3'-phospho-ribonucleotide-RNA + ATP = a 3'-end 2',3'-cyclophospho-ribonucleotide-RNA + AMP + diphosphate. Catalyzes the conversion of 3'-phosphate to a 2',3'-cyclic phosphodiester at the end of RNA. The mechanism of action of the enzyme occurs in 3 steps: (A) adenylation of the enzyme by ATP; (B) transfer of adenylate to an RNA-N3'P to produce RNA-N3'PP5'A; (C) and attack of the adjacent 2'-hydroxyl on the 3'-phosphorus in the diester linkage to produce the cyclic end product. The biological role of this enzyme is unknown but it is likely to function in some aspects of cellular RNA processing. This chain is RNA 3'-terminal phosphate cyclase (rtcA), found in Pyrococcus horikoshii (strain ATCC 700860 / DSM 12428 / JCM 9974 / NBRC 100139 / OT-3).